Reading from the N-terminus, the 2515-residue chain is Nonribosomal peptide synthetase tpzA (2515 aa).

The segment at 246–648 (ELATRQPGAQ…GRMGTQVKLR (403 aa)) is adenylation 1. Residues 794–867 (SEVEHLIHAI…DMATVALKTS (74 aa)) form the Carrier 1 domain. Ser828 carries the post-translational modification O-(pantetheine 4'-phosphoryl)serine. Residues 924-1332 (DAYPCSPLQE…IRSVPHITPE (409 aa)) form a condensation 1 region. The segment at 1357–1758 (RKQSQETPSA…GRMNDQIKLR (402 aa)) is adenylation 2. The Carrier 2 domain maps to 1900–1976 (LATTNEERTL…AILSHLTGRK (77 aa)). Ser1937 is subject to O-(pantetheine 4'-phosphoryl)serine. The condensation 2 stretch occupies residues 2013–2431 (VEDIYPCGPI…LGILPPEEQK (419 aa)). The 77-residue stretch at 2436 to 2512 (PSLSAAVVRL…AMARRSLVVS (77 aa)) folds into the Carrier 3 domain. O-(pantetheine 4'-phosphoryl)serine is present on Ser2473.

This sequence belongs to the NRP synthetase family.

Its pathway is secondary metabolite biosynthesis. In terms of biological role, nonribosomal peptide synthetase; part of the gene cluster that mediates the biosynthesis of terreazepine,. The first step of terreazepine biosynthesis is catalyzed by the indoleamine 2,3-dioxygenase tpzB which produces N-formyl-kynurenine through the catabolism of tryptophan. The two-module NRPS tpzA then utilizes anthranilate and kynurenine to assemble terreazepine. The first adenylation domain of tpzA (A1) loads anthranilate onto the T1 domain, while A2 loads kynurenine, generated through spontaneous nonenzymatic deformylation of the tzpB-supplied N-formyl-kynurenine. TpzA produces a 2:1 mixture of S-R enantiomers, which suggests that the A2 domain accepts both D- and L-kynurenine. The peptide bond formation between the tethered amino acids is catalyzed by the first condensation domain (C1) between anthranilate's carbonyl carbon and kynurenine's aliphatic primary amine. The second C domain (C2) catalyzes the final cyclization event between the aromatic amine of kynurenine and the tethered carbonyl carbon, yielding the final terreazepine product. The T3 domain may facilitate the interaction with downstream tailoring enzymes. The chain is Nonribosomal peptide synthetase tpzA from Aspergillus terreus (strain NIH 2624 / FGSC A1156).